A 477-amino-acid polypeptide reads, in one-letter code: UDP-N-acetylmuramate--L-alanine ligase (477 aa).

112 to 118 (GAHGKTT) contacts ATP.

The protein belongs to the MurCDEF family.

The protein resides in the cytoplasm. It carries out the reaction UDP-N-acetyl-alpha-D-muramate + L-alanine + ATP = UDP-N-acetyl-alpha-D-muramoyl-L-alanine + ADP + phosphate + H(+). Its pathway is cell wall biogenesis; peptidoglycan biosynthesis. Its function is as follows. Cell wall formation. The sequence is that of UDP-N-acetylmuramate--L-alanine ligase from Delftia acidovorans (strain DSM 14801 / SPH-1).